Reading from the N-terminus, the 409-residue chain is Lissencephaly-1 homolog (409 aa).

The 33-residue stretch at 7-39 (RRERSNQAIADYLGSNGYTDALEAFRKEADMPN) folds into the LisH domain. Positions 54 to 81 (TSVIRLQKKVMELEAKLSEAEKEAIEGA) form a coiled coil. WD repeat units lie at residues 104 to 145 (GHRA…RTLK), 146 to 185 (GHTDSVQDLAFDSHGKLLASCSSDLSIKLWDFQQTFECVK), 189 to 228 (GHDHNVSSVSFVPAGDYLLSASRDKTIKMWEVATGYCVKT), 231 to 270 (GHREWVRMVRVNVDGSLMASCSNDHSVRVWQTNSKECKAE), 273 to 332 (EHEN…CLFT), 335 to 374 (GHDNWVRGIVFHPGGKYMLSASDDKTLRIWDLRNKRCMKT), and 377 to 409 (AHSHFCTSLDMHKSHPYVISGSVDTTVKVWECR).

Belongs to the WD repeat LIS1/nudF family.

The protein resides in the cytoplasm. The protein localises to the cytoskeleton. Its subcellular location is the microtubule organizing center. It localises to the centrosome. In terms of biological role, positively regulates the activity of the minus-end directed microtubule motor protein dynein. May enhance dynein-mediated microtubule sliding by targeting dynein to the microtubule plus end. Required for several dynein- and microtubule-dependent processes. The chain is Lissencephaly-1 homolog from Aedes aegypti (Yellowfever mosquito).